Here is a 363-residue protein sequence, read N- to C-terminus: Trichocyst matrix protein T4-B (363 aa).

Residues 1–17 form the signal peptide; that stretch reads MARSLTILAIVFAVATA. Positions 18 to 52 are excised as a propeptide; the sequence is RVTKSESPKEILAQVNKDSFGNSILSVLQLQLATG. Residues 85 to 119 adopt a coiled-coil conformation; that stretch reads VAFEKIIADLEQEIAYHQTQIVALSNLRDSTTEAL. A propeptide spanning residues 190–221 is cleaved from the precursor; sequence RFEKVQAKLMESKHALFKPLINALTQLASKVD. Residues 244–352 are a coiled coil; it reads ASLLATEERQ…EVLTQKLSAA (109 aa).

The protein belongs to the TMP family. Post-translationally, two components are produced by post-translational processing from the precursor peptide.

The protein resides in the trichocyst. Its function is as follows. Structural protein that crystallize inside the trichocyst matrix. The protein is Trichocyst matrix protein T4-B (T4B) of Paramecium tetraurelia.